A 363-amino-acid polypeptide reads, in one-letter code: Serpentine receptor class beta-17 (363 aa).

The next 7 membrane-spanning stretches (helical) occupy residues 46–66, 75–95, 120–140, 169–189, 214–234, 273–293, and 304–324; these read AFLL…GSII, LLAF…SCFL, VILA…SMLC, IGFV…LYMY, YIFI…IGLY, CAQL…RIFL, and VTEF…ICIV.

It belongs to the nematode receptor-like protein srb family.

The protein localises to the membrane. This Caenorhabditis elegans protein is Serpentine receptor class beta-17 (srb-17).